Here is a 616-residue protein sequence, read N- to C-terminus: Elongation factor 4 (616 aa).

The tr-type G domain maps to 14-195 (SRIRNFCIIA…EVIRQVPPPV (182 aa)). GTP-binding positions include 26-31 (DHGKST) and 142-145 (NKID).

The protein belongs to the TRAFAC class translation factor GTPase superfamily. Classic translation factor GTPase family. LepA subfamily.

The protein resides in the cell membrane. It catalyses the reaction GTP + H2O = GDP + phosphate + H(+). Required for accurate and efficient protein synthesis under certain stress conditions. May act as a fidelity factor of the translation reaction, by catalyzing a one-codon backward translocation of tRNAs on improperly translocated ribosomes. Back-translocation proceeds from a post-translocation (POST) complex to a pre-translocation (PRE) complex, thus giving elongation factor G a second chance to translocate the tRNAs correctly. Binds to ribosomes in a GTP-dependent manner. The protein is Elongation factor 4 of Nocardia farcinica (strain IFM 10152).